A 387-amino-acid chain; its full sequence is 3-ketoacyl-CoA thiolase (387 aa).

Residue cysteine 91 is the Acyl-thioester intermediate of the active site. Active-site proton acceptor residues include histidine 343 and cysteine 373.

Belongs to the thiolase-like superfamily. Thiolase family. As to quaternary structure, heterotetramer of two alpha chains (FadB) and two beta chains (FadA).

Its subcellular location is the cytoplasm. It catalyses the reaction an acyl-CoA + acetyl-CoA = a 3-oxoacyl-CoA + CoA. It functions in the pathway lipid metabolism; fatty acid beta-oxidation. Catalyzes the final step of fatty acid oxidation in which acetyl-CoA is released and the CoA ester of a fatty acid two carbons shorter is formed. The polypeptide is 3-ketoacyl-CoA thiolase (Shigella sonnei (strain Ss046)).